A 1988-amino-acid polypeptide reads, in one-letter code: Sodium channel protein type 9 subunit alpha (1988 aa).

Residues 1-125 are Cytoplasmic-facing; that stretch reads MAMLPPPGPQ…RRISIKILVH (125 aa). Positions 26–39 are enriched in basic and acidic residues; the sequence is RIAERKSKEPKEEK. Residues 26–55 are disordered; that stretch reads RIAERKSKEPKEEKKDDDEEAPKPSSDLEA. The stretch at 112–410 is one I repeat; sequence FSPLRRISIK…VAMAYEEQNQ (299 aa). Residues 126-145 traverse the membrane as a helical segment; the sequence is SLFSMLIMCTILTNCIFMTM. At 146-150 the chain is on the extracellular side; sequence NNPPD. A helical membrane pass occupies residues 151–172; that stretch reads WTKNVEYTFTGIYTFESLVKIL. Over 173 to 185 the chain is Cytoplasmic; sequence ARGFCVGEFTFLR. The helical transmembrane segment at 186–204 threads the bilayer; it reads DPWNWLDFVVIVFAYLTEF. Topologically, residues 205–210 are extracellular; sequence VNLGNV. N209 is a glycosylation site (N-linked (GlcNAc...) asparagine). Residues 211 to 227 form a helical membrane-spanning segment; it reads SALRTFRVLRALKTISV. The Cytoplasmic segment spans residues 228-241; the sequence is IPGLKTIVGALIQS. Residues 242–267 form a helical membrane-spanning segment; the sequence is VKKLSDVMILTVFCLSVFALIGLQLF. The Extracellular portion of the chain corresponds to 268 to 346; it reads MGNLKHKCFR…PDYGYTSFDT (79 aa). C275 and C324 are disulfide-bonded. N-linked (GlcNAc...) asparagine glycosylation is present at N283. Positions 347–363 form an intramembrane region, pore-forming; it reads FSWAFLALFRLMTQDYW. Residues 364–376 are Extracellular-facing; sequence ENLYQQTLRAAGK. Residues 377–402 form a helical membrane-spanning segment; it reads TYMIFFVVVIFLGSFYLINLILAVVA. Residues 403–745 lie on the Cytoplasmic side of the membrane; the sequence is MAYEEQNQAN…CIYFIVMDPF (343 aa). The segment covering 461-471 has biased composition (low complexity); it reads SSSETSKLSSK. 2 disordered regions span residues 461 to 543 and 565 to 611; these read SSSE…RGSL and GSET…SPPM. The span at 474–486 shows a compositional bias: basic residues; the sequence is KERRNRRKKKNQK. Basic and acidic residues-rich tracts occupy residues 489 to 510 and 573 to 585; these read SSGEEKGDAEKLSKSESEDSIR and DEHSIFGDNESRR. One copy of the II repeat lies at 726–989; that stretch reads CSPYWIKFKK…EEDPDANNLQ (264 aa). A helical membrane pass occupies residues 746 to 762; that stretch reads VDLAITICIVLNTLFMA. Over 763-771 the chain is Extracellular; the sequence is MEHHPMTEE. A helical membrane pass occupies residues 772-796; that stretch reads FKNVLAIGNLVFTGIFAAEMVLKLI. Topologically, residues 797–805 are cytoplasmic; sequence AMDPYEYFQ. The helical transmembrane segment at 806–822 threads the bilayer; it reads VGWNIFDSLIVTLSLVE. Residues 823–831 lie on the Extracellular side of the membrane; sequence LFLADVEGL. Residues 832–848 form a helical membrane-spanning segment; it reads SVLRSFRLLRVFKLAKS. Over 849-865 the chain is Cytoplasmic; sequence WPTLNMLIKIIGNSVGA. A helical membrane pass occupies residues 866-888; sequence LGNLTLVLAIIVFIFAVVGMQLF. At 889-915 the chain is on the extracellular side; the sequence is GKSYKECVCKINDDCTLPRWHMNDFFH. A disulfide bridge links C897 with C903. The segment at residues 916–928 is an intramembrane region (pore-forming); sequence SFLIVFRVLCGEW. Residues 929–940 are Extracellular-facing; sequence IETMWDCMEVAG. C935 and C944 are joined by a disulfide. A helical transmembrane segment spans residues 941 to 967; that stretch reads QAMCLIVYMMVMVIGNLVVLNLFLALL. Residues 968 to 1187 lie on the Cytoplasmic side of the membrane; it reads LSSFSSDNLT…WWNIRKTCYK (220 aa). A disordered region spans residues 1102 to 1148; that stretch reads NAEELSSDSDSEYSKVRLNRSSSSECSTVDNPLPGEGEEAEAEPMNS. Residues 1120 to 1131 show a composition bias toward polar residues; that stretch reads NRSSSSECSTVD. The span at 1137–1148 shows a compositional bias: acidic residues; it reads EGEEAEAEPMNS. The III repeat unit spans residues 1180–1488; that stretch reads NIRKTCYKIV…KKYYNAMKKL (309 aa). A helical transmembrane segment spans residues 1188-1212; that stretch reads IVEHSWFESFIVLMILLSSGALAFE. Residues 1213 to 1224 lie on the Extracellular side of the membrane; the sequence is DIYIERKKTIKI. Residues 1225–1250 form a helical membrane-spanning segment; sequence ILEYADKIFTYIFILEMLLKWIAYGY. Residues 1251 to 1252 are Cytoplasmic-facing; it reads KT. A helical transmembrane segment spans residues 1253-1278; sequence YFTNAWCWLDFLIVDVSLVTLVANTL. The Extracellular portion of the chain corresponds to 1279-1287; it reads GYSDLGPIK. Residues 1288 to 1304 traverse the membrane as a helical segment; sequence SLRTLRALRPLRALSRF. Residues 1305–1317 are Cytoplasmic-facing; sequence EGMRVVVNALIGA. Residues 1318 to 1342 traverse the membrane as a helical segment; that stretch reads IPSIMNVLLVCLIFWLIFSIMGVNL. The Extracellular segment spans residues 1343 to 1394; that stretch reads FAGKFYECINTTDGSRFPASQVPNRSECFALMNVSQNVRWKNLKVNFDNVGL. C1350 and C1370 are disulfide-bonded. N1352, N1366, and N1375 each carry an N-linked (GlcNAc...) asparagine glycan. The segment at residues 1395 to 1405 is an intramembrane region (pore-forming); sequence GYLSLLQVATF. Topologically, residues 1406-1431 are extracellular; that stretch reads KGWTIIMYAAVDSVNVDKQPKYEYSL. A helical transmembrane segment spans residues 1432 to 1457; sequence YMYIYFVVFIIFGSFFTLNLFIGVII. The Cytoplasmic portion of the chain corresponds to 1458–1514; sequence DNFNQQKKKLGGQDIFMTEEQKKYYNAMKKLGSKKPQKPIPRPGNKIQGCIFDLVTN. S1490 carries the phosphoserine; by PKC modification. The IV repeat unit spans residues 1497–1795; that stretch reads IPRPGNKIQG…WEKFDPDATQ (299 aa). A helical transmembrane segment spans residues 1515-1534; the sequence is QAFDISIMVLICLNMVTMMV. The Extracellular portion of the chain corresponds to 1535–1545; it reads EKEGQSQHMTE. The chain crosses the membrane as a helical span at residues 1546-1567; that stretch reads VLYWINVVFIILFTGECVLKLI. At 1568-1576 the chain is on the cytoplasmic side; the sequence is SLRHYYFTV. A helical membrane pass occupies residues 1577–1598; it reads GWNIFDFVVVIISIVGMFLADL. At 1599-1607 the chain is on the extracellular side; that stretch reads IETYFVSPT. Residues 1608-1627 form a helical membrane-spanning segment; the sequence is LFRVIRLARIGRILRLVKGA. The Cytoplasmic segment spans residues 1628–1640; the sequence is KGIRTLLFALMMS. A helical membrane pass occupies residues 1641-1663; sequence LPALFNIGLLLFLVMFIYAIFGM. Residues 1664–1686 lie on the Extracellular side of the membrane; the sequence is SNFAYVKKEDGINDMFNFETFGN. The segment at residues 1687 to 1699 is an intramembrane region (pore-forming); that stretch reads SMICLFQITTSAG. Residues 1700–1733 lie on the Extracellular side of the membrane; sequence WDGLLAPILNSKPPDCDPKKVHPGSSVEGDCGNP. The cysteines at positions 1715 and 1730 are disulfide-linked. Residues 1734–1759 traverse the membrane as a helical segment; it reads SVGIFYFVSYIIISFLVVVNMYIAVI. At 1760 to 1988 the chain is on the cytoplasmic side; sequence LENFSVATEE…KGKDSKESKK (229 aa). An IQ domain is found at 1889-1918; sequence EDVSATVIQRAYRRYRLRQNVKNISSIYIK. The interval 1934 to 1988 is disordered; sequence FDNVNENSSPEKTDATSSTTSPPSYDSVTKPDKEKYEQDRTEKEDKGKDSKESKK. The span at 1948–1961 shows a compositional bias: low complexity; the sequence is ATSSTTSPPSYDSV. Positions 1962-1988 are enriched in basic and acidic residues; sequence TKPDKEKYEQDRTEKEDKGKDSKESKK.

The protein belongs to the sodium channel (TC 1.A.1.10) family. Nav1.7/SCN9A subfamily. In terms of assembly, the Nav1.7 voltage-gated sodium channel consists of an ion-conducting alpha subunit SCN9A which is functional on its own regulated by one or more beta-1 (SCN1B), beta-2 (SCN2B), beta-3 (SCN3B) and beta-4 (SCN4B) subunits. SCN1B and SCN3B are non-covalently associated with SCN9A. SCN2B and SCN4B are disulfide-linked to SCN9A. SCN1B regulates channel inactivation. Interacts with NEDD4 and NEDD4L; regulates Nav1.7 activity most probably through ubiquitination and subsequent endocytosis. Interacts with TMEM233; modulates the gating properties of NaV1.7. In terms of processing, phosphorylation at Ser-1490 by PKC in a highly conserved cytoplasmic loop increases peak sodium currents. Post-translationally, ubiquitinated by NEDD4L; which may promote its endocytosis. As to expression, expressed strongly in dorsal root ganglion, with only minor levels elsewhere in the body, smooth muscle cells, MTC cell line and C-cell carcinoma. Also expressed in vagus nerves within the head and neck region. Isoform 1 is expressed preferentially in the central and peripheral nervous system. Isoform 2 is expressed preferentially in the dorsal root ganglion.

The protein resides in the cell membrane. It is found in the cell projection. Its subcellular location is the neuron projection. It localises to the axon. The enzyme catalyses Na(+)(in) = Na(+)(out). With respect to regulation, inhibited by tetrodotoxin. Weakly inhibited by saxitoxin. Inhibited by the spider huwentoxin-IV that binds the extracellular loop S3-S4 of repeat II. Inhibited by the spider protoxin-II that binds the extracellular loop S3-S4 of repeats II and IV. Inhibited by the scorpion alpha-toxins CvIV4 and AaH2. Inhibited by the conotoxin GVIIJ. Inhibited by the spider beta/delta-theraphotoxin-Pre1a. Its function is as follows. Pore-forming subunit of Nav1.7, a voltage-gated sodium (Nav) channel that directly mediates the depolarizing phase of action potentials in excitable membranes. Navs, also called VGSCs (voltage-gated sodium channels) or VDSCs (voltage-dependent sodium channels), operate by switching between closed and open conformations depending on the voltage difference across the membrane. In the open conformation they allow Na(+) ions to selectively pass through the pore, along their electrochemical gradient. The influx of Na(+) ions provokes membrane depolarization, initiating the propagation of electrical signals throughout cells and tissues. Nav1.7 plays a crucial role in controlling the excitability and action potential propagation from nociceptor neurons, thereby contributing to the sensory perception of pain. The sequence is that of Sodium channel protein type 9 subunit alpha from Homo sapiens (Human).